A 554-amino-acid polypeptide reads, in one-letter code: Arginine--tRNA ligase (554 aa).

The 'HIGH' region motif lies at 130–140 (ANPTGDLHIGH).

This sequence belongs to the class-I aminoacyl-tRNA synthetase family. As to quaternary structure, monomer.

It is found in the cytoplasm. The enzyme catalyses tRNA(Arg) + L-arginine + ATP = L-arginyl-tRNA(Arg) + AMP + diphosphate. The sequence is that of Arginine--tRNA ligase from Staphylococcus carnosus (strain TM300).